Reading from the N-terminus, the 912-residue chain is Probable dipeptidyl-aminopeptidase B (912 aa).

Disordered stretches follow at residues 1–30 (MAAE…SNSL) and 48–68 (NGST…DYSD). The Cytoplasmic segment spans residues 1-92 (MAAEKGGSSD…GGKPVQKKVK (92 aa)). 2 stretches are compositionally biased toward basic and acidic residues: residues 7-25 (GSSD…EYRD) and 54-67 (TGPD…RDYS). The chain crosses the membrane as a helical; Signal-anchor for type II membrane protein span at residues 93 to 113 (IVLGFLLFLCLSGWSLAFVLF). At 114–912 (LFGGHESSKT…RAATWVGMSI (799 aa)) the chain is on the vacuolar side. N-linked (GlcNAc...) asparagine glycans are attached at residues Asn-130, Asn-210, Asn-346, Asn-569, and Asn-656. Residue Ser-751 is the Charge relay system of the active site. Asn-810 is a glycosylation site (N-linked (GlcNAc...) asparagine). Active-site charge relay system residues include Asp-828 and His-861. Asn-897 carries N-linked (GlcNAc...) asparagine glycosylation.

It belongs to the peptidase S9B family.

The protein localises to the vacuole membrane. The enzyme catalyses Release of an N-terminal dipeptide, Xaa-Yaa-|-Zaa-, from a polypeptide, preferentially when Yaa is Pro, provided Zaa is neither Pro nor hydroxyproline.. Its function is as follows. Type IV dipeptidyl-peptidase which removes N-terminal dipeptides sequentially from polypeptides having unsubstituted N-termini provided that the penultimate residue is proline. This is Probable dipeptidyl-aminopeptidase B (DAPB) from Paracoccidioides brasiliensis (strain Pb18).